Consider the following 957-residue polypeptide: MTQTLSQLENRGAFIERHIGPDAQQQQEMLKTVGADSLNALIGQIVPKDIQLATPPQVGEATTEFAALAELKAIAGLNKRFKSYIGMGYTPVQLPPVILRNMLENPGWYTAYTPYQPEVSQGRLEALLNFQQVTLDLTGLDIASASLLDEATAAAEAMAMAKRVSKLKNANRFFVAADVHPQTLDVVRTRAETFGFDVIVDDADKVLDHQDVFGVLLQQVGTTGEVHDYSALISELKSRKIIVSVAADFMALVLLTAPGKQGADIVFGSAQRFGVPMGYGGPHAAFFAGKDEFKRSMPGRIIGVSKDAAGNTALRMAMQTREQHIRREKANSNICTSQVLLANIASLYAVFHGPVGLKRIATRIHRFADILATGLQQKGLKLRHAHYFDTLCVEVADKAGVLARAEAAEINLRSDILNAVGITLDETTTREDVQNLFNVLLGDAHGLDVDALDKEVAHDSRSIQESMLRDDAILSHPVFNRHHSETEMMRYMHSLERKDLALNQAMIPLGSCTMKLNAAAEMIPITWPEFSELHPFCPADQAEGYHQMINQLSDWLVKLTGYDALCMQPNSGAQGEYAGLLAIRHYHESRNEGHRDICLIPSSAHGTNPASAQMAGMEVVVVACDKNGNIDLTDLRAKAEHAGEKLSCIMVTYPSTHGVYEETIREVCEIVHQFGGQVYLDGANMNAQVGITSPGFIGADVSHLNLHKTFCIPHGGGGPGMGPIGVKAHLAPFVPGHSVVQIEGMLTRQGAVSAAPFGSASILPISWMYIRMMGAEGLKQASQVAILNANYIATRLKDAYPVLYTGRDGRVAHECILDIRPLKDDTGISELDIAKRLIDYGFHAPTMSFPVAGTLMVEPTESESKVELDRFIEAMLAIRHEITRVKQGEWTLEDNPLVNAPHTQNELVAEWHHGYTREVAVFPAGMANKYWPTVKRLDDVYGDRNLFCSCVPMSEYQ.

Lys708 is subject to N6-(pyridoxal phosphate)lysine.

Belongs to the GcvP family. The glycine cleavage system is composed of four proteins: P, T, L and H. The cofactor is pyridoxal 5'-phosphate.

It carries out the reaction N(6)-[(R)-lipoyl]-L-lysyl-[glycine-cleavage complex H protein] + glycine + H(+) = N(6)-[(R)-S(8)-aminomethyldihydrolipoyl]-L-lysyl-[glycine-cleavage complex H protein] + CO2. Functionally, the glycine cleavage system catalyzes the degradation of glycine. The P protein binds the alpha-amino group of glycine through its pyridoxal phosphate cofactor; CO(2) is released and the remaining methylamine moiety is then transferred to the lipoamide cofactor of the H protein. This chain is Glycine dehydrogenase (decarboxylating), found in Enterobacter sp. (strain 638).